The primary structure comprises 137 residues: Large ribosomal subunit protein uL16 (137 aa).

It belongs to the universal ribosomal protein uL16 family. Part of the 50S ribosomal subunit.

Its function is as follows. Binds 23S rRNA and is also seen to make contacts with the A and possibly P site tRNAs. The chain is Large ribosomal subunit protein uL16 from Rhizobium meliloti (strain 1021) (Ensifer meliloti).